The sequence spans 141 residues: Cystatin-13 (141 aa).

The N-terminal stretch at 1-24 (MARFLQTLLFLVIMVEFVSRRVEA) is a signal peptide. Residues 76 to 80 (QITDS) form a secondary area of contact region. 2 disulfide bridges follow: Cys94-Cys104 and Cys118-Cys138.

Belongs to the cystatin family. Expressed exclusively in testis. Found in spermatagonia, spermatocytes, round spermatids, elongating spermatids and spermatozoa.

It localises to the secreted. The protein resides in the cytoplasm. May perform a specialized role during sperm development and maturation. The chain is Cystatin-13 from Mus musculus (Mouse).